Consider the following 264-residue polypeptide: Thymidylate synthase (264 aa).

Arg21 is a binding site for dUMP. Residue His51 coordinates (6R)-5,10-methylene-5,6,7,8-tetrahydrofolate. 126–127 provides a ligand contact to dUMP; sequence RR. Cys146 serves as the catalytic Nucleophile. DUMP contacts are provided by residues 166-169, Asn177, and 207-209; these read RSAD and HLY. Asp169 lines the (6R)-5,10-methylene-5,6,7,8-tetrahydrofolate pocket. A (6R)-5,10-methylene-5,6,7,8-tetrahydrofolate-binding site is contributed by Ala263.

Belongs to the thymidylate synthase family. Bacterial-type ThyA subfamily. In terms of assembly, homodimer.

The protein localises to the cytoplasm. It catalyses the reaction dUMP + (6R)-5,10-methylene-5,6,7,8-tetrahydrofolate = 7,8-dihydrofolate + dTMP. It participates in pyrimidine metabolism; dTTP biosynthesis. Its function is as follows. Catalyzes the reductive methylation of 2'-deoxyuridine-5'-monophosphate (dUMP) to 2'-deoxythymidine-5'-monophosphate (dTMP) while utilizing 5,10-methylenetetrahydrofolate (mTHF) as the methyl donor and reductant in the reaction, yielding dihydrofolate (DHF) as a by-product. This enzymatic reaction provides an intracellular de novo source of dTMP, an essential precursor for DNA biosynthesis. This is Thymidylate synthase from Methylobacterium nodulans (strain LMG 21967 / CNCM I-2342 / ORS 2060).